We begin with the raw amino-acid sequence, 398 residues long: Acetate kinase (398 aa).

Asn7 contacts Mg(2+). An ATP-binding site is contributed by Lys14. Arg91 contacts substrate. Residue Asp148 is the Proton donor/acceptor of the active site. ATP contacts are provided by residues 208-212 (HLGNG), 283-285 (DFR), and 331-335 (GIGEH). Glu386 provides a ligand contact to Mg(2+).

This sequence belongs to the acetokinase family. Homodimer. It depends on Mg(2+) as a cofactor. The cofactor is Mn(2+).

It is found in the cytoplasm. It catalyses the reaction acetate + ATP = acetyl phosphate + ADP. It functions in the pathway metabolic intermediate biosynthesis; acetyl-CoA biosynthesis; acetyl-CoA from acetate: step 1/2. Catalyzes the formation of acetyl phosphate from acetate and ATP. Can also catalyze the reverse reaction. This Clostridium botulinum (strain Alaska E43 / Type E3) protein is Acetate kinase.